The primary structure comprises 175 residues: uncharacterized protein (175 aa).

Residues 143–166 traverse the membrane as a helical segment; that stretch reads TCFLFCAFVTSIFIETDYSIFFLL.

The protein localises to the membrane. This is an uncharacterized protein from Saccharomyces cerevisiae (strain ATCC 204508 / S288c) (Baker's yeast).